Reading from the N-terminus, the 117-residue chain is Large ribosomal subunit protein uL18 (117 aa).

The protein belongs to the universal ribosomal protein uL18 family. In terms of assembly, part of the 50S ribosomal subunit; part of the 5S rRNA/L5/L18/L25 subcomplex. Contacts the 5S and 23S rRNAs.

This is one of the proteins that bind and probably mediate the attachment of the 5S RNA into the large ribosomal subunit, where it forms part of the central protuberance. The sequence is that of Large ribosomal subunit protein uL18 from Polynucleobacter necessarius subsp. necessarius (strain STIR1).